Consider the following 624-residue polypeptide: MSIDIEKYPTLALVETPEDLRLLPKESLPKLCDELRLYLLNSVSRSSGHFASGLGAIELTVALHYVYKTPFDNLIWDVGHQAYPHKILTGRRDRIDTIRQKNGLHPFPWRDESEYDKLCVGHSSTSISAGLGMAVAAEQENLGRKTVCVIGDGAITAGMAFEAMNHAGDINPDMLVVLNDNEMSISENVGALNNHLAQLLSGKLYTTLREGGKKVFSGIPPIKELLKKTEEHIKGMVVPGTMFEELGFNYIGPVDGHDVIALVQTLTNMRDLKGPQLLHIMTKKGRGYAPAEQDPISWHAVPKFDPKTGTLPKSPNARPTFSKIFGDWLCEEAATDEKLMAITPAMREGSGMVRFSKEYPAQYFDVAIAEQHAVTFAAGLAIGGYKPIVAIYSTFLQRAYDQVIHDVAIQKLPVLFAIDRGGIVGADGQTHQGAFDLSFLRCIPNMIIMAPSDENECRQMLHTGYHYQEGPVAVRYPRGSGVGAPLQPLSELPIGKGIIRRQGKSIAILNFGTLLPEALDVAEKLDATVADMRFIKPLDKELILSLAKQHDILVTLEENAIMGGAGSGVNELLMQERCLVPVLNLGLPDLFVPQGGQEEIRADLGLDATGIEKSIKAYQAHSLR.

Thiamine diphosphate contacts are provided by residues His80 and 121-123 (GHS). Asp152 serves as a coordination point for Mg(2+). Residues 153–154 (GA), Asn181, Tyr288, and Glu370 contribute to the thiamine diphosphate site. Residue Asn181 participates in Mg(2+) binding.

Belongs to the transketolase family. DXPS subfamily. In terms of assembly, homodimer. Mg(2+) serves as cofactor. Thiamine diphosphate is required as a cofactor.

It catalyses the reaction D-glyceraldehyde 3-phosphate + pyruvate + H(+) = 1-deoxy-D-xylulose 5-phosphate + CO2. It functions in the pathway metabolic intermediate biosynthesis; 1-deoxy-D-xylulose 5-phosphate biosynthesis; 1-deoxy-D-xylulose 5-phosphate from D-glyceraldehyde 3-phosphate and pyruvate: step 1/1. Functionally, catalyzes the acyloin condensation reaction between C atoms 2 and 3 of pyruvate and glyceraldehyde 3-phosphate to yield 1-deoxy-D-xylulose-5-phosphate (DXP). The protein is 1-deoxy-D-xylulose-5-phosphate synthase of Proteus mirabilis (strain HI4320).